Reading from the N-terminus, the 128-residue chain is Modulator protein MzrA (128 aa).

The Cytoplasmic segment spans residues 1–13 (MLALLRPYLSTRV). The helical transmembrane segment at 14 to 34 (LCVLVVCFSALMLVAFIPTLF) threads the bilayer. Over 35-128 (RNDTALQIRA…RLSLRKQSVG (94 aa)) the chain is Periplasmic.

Belongs to the MzrA family. In terms of assembly, interacts with EnvZ.

Its subcellular location is the cell inner membrane. Functionally, modulates the activity of the EnvZ/OmpR two-component regulatory system, probably by directly modulating EnvZ enzymatic activity and increasing stability of phosphorylated OmpR. In Erwinia billingiae (strain Eb661), this protein is Modulator protein MzrA.